The chain runs to 103 residues: uncharacterized protein (103 aa).

This is an uncharacterized protein from Archaeoglobus fulgidus (strain ATCC 49558 / DSM 4304 / JCM 9628 / NBRC 100126 / VC-16).